The chain runs to 162 residues: Large ribosomal subunit protein uL10 (162 aa).

It belongs to the universal ribosomal protein uL10 family. As to quaternary structure, part of the ribosomal stalk of the 50S ribosomal subunit. The N-terminus interacts with L11 and the large rRNA to form the base of the stalk. The C-terminus forms an elongated spine to which L12 dimers bind in a sequential fashion forming a multimeric L10(L12)X complex.

Functionally, forms part of the ribosomal stalk, playing a central role in the interaction of the ribosome with GTP-bound translation factors. In Borrelia garinii subsp. bavariensis (strain ATCC BAA-2496 / DSM 23469 / PBi) (Borreliella bavariensis), this protein is Large ribosomal subunit protein uL10.